The sequence spans 112 residues: uncharacterized protein (112 aa).

N29 and N60 each carry an N-linked (GlcNAc...) asparagine; by host glycan. Residues 66 to 86 (IFNGLGFILIVIFIYLLLITL) form a helical membrane-spanning segment.

The protein belongs to the asfivirus B117L family.

The protein resides in the host membrane. The protein localises to the virion. This is an uncharacterized protein from African swine fever virus (isolate Tick/South Africa/Pretoriuskop Pr4/1996) (ASFV).